The primary structure comprises 231 residues: MKQETGKKRIIIAIDGPAASGKSTTARKVAHLLGYTYIDTGAMYRSVTLKALKQGVLDSLHHSPESVSGLLHDIVIHFEGDHVFLDGEDVTAEIRSNQVSREVSFISSLKPVRDRLREMQQHLGRQRGVVMDGRDIGTVVFPDAELKIYLVADARERAKRRHAELTAKSAEGVELPDLDSLEQEITKRDRDDAEREHAPLKKHPEAYEIDTSAMTIERQVEMVCQLARARE.

16-24 (GPAASGKST) contacts ATP. The tract at residues 176–205 (PDLDSLEQEITKRDRDDAEREHAPLKKHPE) is disordered. Residues 184–205 (EITKRDRDDAEREHAPLKKHPE) are compositionally biased toward basic and acidic residues.

The protein belongs to the cytidylate kinase family. Type 1 subfamily.

It is found in the cytoplasm. The catalysed reaction is CMP + ATP = CDP + ADP. The enzyme catalyses dCMP + ATP = dCDP + ADP. The polypeptide is Cytidylate kinase (Pelodictyon phaeoclathratiforme (strain DSM 5477 / BU-1)).